A 276-amino-acid polypeptide reads, in one-letter code: MGIKKFRPTSPGVRQMTVSTFEEITKVDPEKSLLTPLSKSGGRNAHGKITVRHRGGGLKRHYRIIDFKRNKDDIPAKVASVEYDPNRTANIALLHYVDGEKRYIIAPKGLKVGEMIFSGPESDIKVGNALPLINIPVGTIIHNIEMKPGKGGQIARSAGNSAQLMAKEGRYALVRLPSGEVRQILIECRATIGQVGNLDHENVTIGKAGRKRKMGIRPTVRGSAMNPNDHPHGGGEGRSPIGRPSPVTPWGKPALGYKTRKKNKHSDKFIVTGRKR.

The interval 219 to 276 is disordered; sequence TVRGSAMNPNDHPHGGGEGRSPIGRPSPVTPWGKPALGYKTRKKNKHSDKFIVTGRKR.

The protein belongs to the universal ribosomal protein uL2 family. In terms of assembly, part of the 50S ribosomal subunit. Forms a bridge to the 30S subunit in the 70S ribosome.

Functionally, one of the primary rRNA binding proteins. Required for association of the 30S and 50S subunits to form the 70S ribosome, for tRNA binding and peptide bond formation. It has been suggested to have peptidyltransferase activity; this is somewhat controversial. Makes several contacts with the 16S rRNA in the 70S ribosome. The protein is Large ribosomal subunit protein uL2 of Alkaliphilus metalliredigens (strain QYMF).